Consider the following 113-residue polypeptide: Protein NATD1 (113 aa).

Positions 1–16 are enriched in low complexity; the sequence is MAQSPAAASPGAPEQG. Residues 1–20 form a disordered region; it reads MAQSPAAASPGAPEQGCPIR. The region spanning 22–112 is the N-acetyltransferase domain; sequence EHDRRRRQFT…PLPQYLERLQ (91 aa).

It belongs to the NATD1 family.

The chain is Protein NATD1 (NATD1) from Bos taurus (Bovine).